Here is a 151-residue protein sequence, read N- to C-terminus: Ribonuclease H (151 aa).

Positions 1–141 (MKHVDIFTDG…ADELARKGME (141 aa)) constitute an RNase H type-1 domain. The Mg(2+) site is built by D9, E47, D69, and D133.

The protein belongs to the RNase H family. In terms of assembly, monomer. Mg(2+) is required as a cofactor.

It localises to the cytoplasm. The enzyme catalyses Endonucleolytic cleavage to 5'-phosphomonoester.. Endonuclease that specifically degrades the RNA of RNA-DNA hybrids. The protein is Ribonuclease H of Rhizobium johnstonii (strain DSM 114642 / LMG 32736 / 3841) (Rhizobium leguminosarum bv. viciae).